The primary structure comprises 333 residues: MGKNITVLGAGAWGTAFGQVLADAGNTVTMWAKEQRIVEDIRDRHHNAVRLPSVEKLPDNMTATGDRAEAVKNADIVVVAIAAQFARVALVEFKGLIPDHAIVVSLMKGIERGTNKRMDEVVRESLDLPADRFAAISGPNLSKEIADRHPAATVVACTNLDNATKVAEACTTSYFKPFVTTDVIGLEMCGSLKNVTALAVGMARGAGYGENTAAMIETRGLAELTALGAAAGADPKTFFGLAGVGDLIATCGSPLSRNYTFGANLGKGLTVEEATKVSNGVAEGVPTTDAVVALGEQLDVPTPLAYQMSRVLNEGISCSEMLAGLFGHEVTGE.

The NADPH site is built by Trp13, Lys33, and Lys108. Lys108 and Gly138 together coordinate sn-glycerol 3-phosphate. Residue Ser142 participates in NADPH binding. Sn-glycerol 3-phosphate is bound by residues Lys193, Asp246, Ser256, Arg257, and Asn258. Lys193 serves as the catalytic Proton acceptor. Arg257 lines the NADPH pocket. Positions 281 and 283 each coordinate NADPH.

It belongs to the NAD-dependent glycerol-3-phosphate dehydrogenase family.

The protein resides in the cytoplasm. It catalyses the reaction sn-glycerol 3-phosphate + NAD(+) = dihydroxyacetone phosphate + NADH + H(+). The catalysed reaction is sn-glycerol 3-phosphate + NADP(+) = dihydroxyacetone phosphate + NADPH + H(+). It participates in membrane lipid metabolism; glycerophospholipid metabolism. Functionally, catalyzes the reduction of the glycolytic intermediate dihydroxyacetone phosphate (DHAP) to sn-glycerol 3-phosphate (G3P), the key precursor for phospholipid synthesis. The chain is Glycerol-3-phosphate dehydrogenase [NAD(P)+] from Bifidobacterium longum subsp. infantis (strain ATCC 15697 / DSM 20088 / JCM 1222 / NCTC 11817 / S12).